Here is a 373-residue protein sequence, read N- to C-terminus: Enoyl-[acyl-carrier-protein] reductase, mitochondrial (373 aa).

Residues 1–53 constitute a mitochondrion transit peptide; the sequence is MWVCSTLWRVRTPARQWRGLLPASGCHGPAASSYSASAEPARVRALVYGHHGD. K61 bears the N6-acetyllysine; alternate mark. K61 is modified (N6-succinyllysine; alternate). Y94 functions as the Proton donor in the catalytic mechanism. Residues N167, 193–196, and 216–218 contribute to the NADP(+) site; these read NSGV and RDR. K252 and K267 each carry N6-acetyllysine; alternate. N6-succinyllysine; alternate is present on residues K252 and K267. Residues 285-288 and 310-312 contribute to the NADP(+) site; these read YGGM and FWL. K316 carries the post-translational modification N6-succinyllysine. K368 lines the NADP(+) pocket.

The protein belongs to the zinc-containing alcohol dehydrogenase family. Quinone oxidoreductase subfamily. As to quaternary structure, homodimer. Isoform 2 interacts with PPARA in the nucleus and increases its activity. Highly expressed in skeletal and heart muscle. Expressed at lower level in placenta, liver, kidney and pancreas. Weakly or not expressed in lung.

The protein localises to the mitochondrion. It is found in the cytoplasm. Its subcellular location is the nucleus. The catalysed reaction is a 2,3-saturated acyl-[ACP] + NADP(+) = a (2E)-enoyl-[ACP] + NADPH + H(+). The enzyme catalyses (2E)-butenoyl-[ACP] + NADPH + H(+) = butanoyl-[ACP] + NADP(+). It catalyses the reaction (2E)-hexenoyl-[ACP] + NADPH + H(+) = hexanoyl-[ACP] + NADP(+). It carries out the reaction (2E)-octenoyl-[ACP] + NADPH + H(+) = octanoyl-[ACP] + NADP(+). The catalysed reaction is (2E)-decenoyl-[ACP] + NADPH + H(+) = decanoyl-[ACP] + NADP(+). The enzyme catalyses (2E)-dodecenoyl-[ACP] + NADPH + H(+) = dodecanoyl-[ACP] + NADP(+). It catalyses the reaction (2E)-tetradecenoyl-[ACP] + NADPH + H(+) = tetradecanoyl-[ACP] + NADP(+). It carries out the reaction (2E)-hexadecenoyl-[ACP] + NADPH + H(+) = hexadecanoyl-[ACP] + NADP(+). In terms of biological role, catalyzes the NADPH-dependent reduction of trans-2-enoyl thioesters in mitochondrial fatty acid synthesis (fatty acid synthesis type II). Fatty acid chain elongation in mitochondria uses acyl carrier protein (ACP) as an acyl group carrier, but the enzyme accepts both ACP and CoA thioesters as substrates in vitro. Displays a preference for medium-chain over short- and long-chain substrates. May provide the octanoyl chain used for lipoic acid biosynthesis, regulating protein lipoylation and mitochondrial respiratory activity particularly in Purkinje cells. Involved in iron homeostasis; affecting Fe-S cluster assembly and ceramide metabolism. Required for proper morphology and bioenergetic functions of mitochondria. Required for maintenance of neurons. This is Enoyl-[acyl-carrier-protein] reductase, mitochondrial (MECR) from Homo sapiens (Human).